We begin with the raw amino-acid sequence, 417 residues long: Serine hydroxymethyltransferase (417 aa).

Residues L121 and 125-127 (GHL) each bind (6S)-5,6,7,8-tetrahydrofolate. K229 is modified (N6-(pyridoxal phosphate)lysine). (6S)-5,6,7,8-tetrahydrofolate is bound at residue 355–357 (SPF).

This sequence belongs to the SHMT family. Homodimer. Requires pyridoxal 5'-phosphate as cofactor.

It is found in the cytoplasm. It carries out the reaction (6R)-5,10-methylene-5,6,7,8-tetrahydrofolate + glycine + H2O = (6S)-5,6,7,8-tetrahydrofolate + L-serine. The protein operates within one-carbon metabolism; tetrahydrofolate interconversion. It functions in the pathway amino-acid biosynthesis; glycine biosynthesis; glycine from L-serine: step 1/1. In terms of biological role, catalyzes the reversible interconversion of serine and glycine with tetrahydrofolate (THF) serving as the one-carbon carrier. This reaction serves as the major source of one-carbon groups required for the biosynthesis of purines, thymidylate, methionine, and other important biomolecules. Also exhibits THF-independent aldolase activity toward beta-hydroxyamino acids, producing glycine and aldehydes, via a retro-aldol mechanism. This Aeromonas salmonicida (strain A449) protein is Serine hydroxymethyltransferase.